Reading from the N-terminus, the 61-residue chain is MAVPKRKTSPSKRGMRRSADALKAPTYVEDKNSGELRRPHHIDLKTGMYRGRQVLTPKESA.

Residues 1–16 (MAVPKRKTSPSKRGMR) are compositionally biased toward basic residues. The segment at 1 to 61 (MAVPKRKTSP…RQVLTPKESA (61 aa)) is disordered. Positions 28-44 (VEDKNSGELRRPHHIDL) are enriched in basic and acidic residues.

The protein belongs to the bacterial ribosomal protein bL32 family.

This is Large ribosomal subunit protein bL32 from Rhizobium etli (strain CIAT 652).